We begin with the raw amino-acid sequence, 134 residues long: MDSRTGELLTAAQSENGVYIWTVKNPLYFKITKHHERPFLRNHDIITIQVQFNYNLRKALGIHKCFLTCQIWTRLHPQTSHFLRVFKYQFIKYLDRLGVISINNCIRAFSHVLYDVLNGTIDVIEKHDIKFNIY.

It belongs to the geminiviridae replication enhancer protein family. As to quaternary structure, homooligomer. Interacts with the replication-associated protein (REP). Interacts with host proliferating cell nuclear antigen (PCNA). Interacts with host retinoblastoma-related protein 1 (RBR1), and may thereby deregulate the host cell cycle. Oligomerization and interaction with PCNA are necessary for optimal replication enhancement.

Functionally, increases viral DNA accumulation. Enhances infectivity and symptom expression. The chain is Replication enhancer protein from Nicotiana tabacum (Common tobacco).